The primary structure comprises 1066 residues: Isoleucine--tRNA ligase (1066 aa).

The 'HIGH' region motif lies at 49 to 59 (PYVSGAIHLGT). The short motif at 625-629 (KMSKS) is the 'KMSKS' region element. An ATP-binding site is contributed by K628.

Belongs to the class-I aminoacyl-tRNA synthetase family. IleS type 2 subfamily. As to quaternary structure, monomer. The cofactor is Zn(2+).

The protein resides in the cytoplasm. It carries out the reaction tRNA(Ile) + L-isoleucine + ATP = L-isoleucyl-tRNA(Ile) + AMP + diphosphate. Its function is as follows. Catalyzes the attachment of isoleucine to tRNA(Ile). As IleRS can inadvertently accommodate and process structurally similar amino acids such as valine, to avoid such errors it has two additional distinct tRNA(Ile)-dependent editing activities. One activity is designated as 'pretransfer' editing and involves the hydrolysis of activated Val-AMP. The other activity is designated 'posttransfer' editing and involves deacylation of mischarged Val-tRNA(Ile). This is Isoleucine--tRNA ligase from Pyrococcus furiosus (strain ATCC 43587 / DSM 3638 / JCM 8422 / Vc1).